A 430-amino-acid chain; its full sequence is Histidinol dehydrogenase (430 aa).

3 residues coordinate NAD(+): Y129, Q190, and N213. S236, Q258, and H261 together coordinate substrate. The Zn(2+) site is built by Q258 and H261. Active-site proton acceptor residues include E326 and H327. Residues H327, D360, E414, and H419 each contribute to the substrate site. D360 lines the Zn(2+) pocket. Residue H419 coordinates Zn(2+).

The protein belongs to the histidinol dehydrogenase family. The cofactor is Zn(2+).

The enzyme catalyses L-histidinol + 2 NAD(+) + H2O = L-histidine + 2 NADH + 3 H(+). The protein operates within amino-acid biosynthesis; L-histidine biosynthesis; L-histidine from 5-phospho-alpha-D-ribose 1-diphosphate: step 9/9. In terms of biological role, catalyzes the sequential NAD-dependent oxidations of L-histidinol to L-histidinaldehyde and then to L-histidine. The protein is Histidinol dehydrogenase of Gluconobacter oxydans (strain 621H) (Gluconobacter suboxydans).